Here is a 227-residue protein sequence, read N- to C-terminus: Octanoyltransferase (227 aa).

The 188-residue stretch at 35–222 folds into the BPL/LPL catalytic domain; sequence EAYENRIIMC…ELGRLLNEKK (188 aa). Substrate is bound by residues 80–87, 152–154, and 165–167; these read RGGDITYH, AIG, and GLA. The active-site Acyl-thioester intermediate is Cys-183.

Belongs to the LipB family.

The protein localises to the cytoplasm. It catalyses the reaction octanoyl-[ACP] + L-lysyl-[protein] = N(6)-octanoyl-L-lysyl-[protein] + holo-[ACP] + H(+). The protein operates within protein modification; protein lipoylation via endogenous pathway; protein N(6)-(lipoyl)lysine from octanoyl-[acyl-carrier-protein]: step 1/2. Catalyzes the transfer of endogenously produced octanoic acid from octanoyl-acyl-carrier-protein onto the lipoyl domains of lipoate-dependent enzymes. Lipoyl-ACP can also act as a substrate although octanoyl-ACP is likely to be the physiological substrate. In Bacteroides thetaiotaomicron (strain ATCC 29148 / DSM 2079 / JCM 5827 / CCUG 10774 / NCTC 10582 / VPI-5482 / E50), this protein is Octanoyltransferase.